We begin with the raw amino-acid sequence, 243 residues long: Phosphatidylserine decarboxylase proenzyme (243 aa).

S212 serves as the catalytic Schiff-base intermediate with substrate; via pyruvic acid. S212 is subject to Pyruvic acid (Ser); by autocatalysis.

Belongs to the phosphatidylserine decarboxylase family. PSD-A subfamily. Heterodimer of a large membrane-associated beta subunit and a small pyruvoyl-containing alpha subunit. Requires pyruvate as cofactor. Is synthesized initially as an inactive proenzyme. Formation of the active enzyme involves a self-maturation process in which the active site pyruvoyl group is generated from an internal serine residue via an autocatalytic post-translational modification. Two non-identical subunits are generated from the proenzyme in this reaction, and the pyruvate is formed at the N-terminus of the alpha chain, which is derived from the carboxyl end of the proenzyme. The post-translation cleavage follows an unusual pathway, termed non-hydrolytic serinolysis, in which the side chain hydroxyl group of the serine supplies its oxygen atom to form the C-terminus of the beta chain, while the remainder of the serine residue undergoes an oxidative deamination to produce ammonia and the pyruvoyl prosthetic group on the alpha chain.

Its subcellular location is the cell membrane. It catalyses the reaction a 1,2-diacyl-sn-glycero-3-phospho-L-serine + H(+) = a 1,2-diacyl-sn-glycero-3-phosphoethanolamine + CO2. It participates in phospholipid metabolism; phosphatidylethanolamine biosynthesis; phosphatidylethanolamine from CDP-diacylglycerol: step 2/2. In terms of biological role, catalyzes the formation of phosphatidylethanolamine (PtdEtn) from phosphatidylserine (PtdSer). The polypeptide is Phosphatidylserine decarboxylase proenzyme (Mycobacterium leprae (strain Br4923)).